Here is a 427-residue protein sequence, read N- to C-terminus: ATP-dependent RNA helicase DDX39A (427 aa).

Over residues 1-19 (MAEQDVENELLDYDEDEEP) the composition is skewed to acidic residues. The segment at 1–36 (MAEQDVENELLDYDEDEEPQAPQESTPAPPKKDVKG) is disordered. Alanine 2 carries the N-acetylalanine modification. Residue lysine 31 forms a Glycyl lysine isopeptide (Lys-Gly) (interchain with G-Cter in SUMO2) linkage. Lysine 35 carries the N6-acetyllysine; alternate modification. Lysine 35 participates in a covalent cross-link: Glycyl lysine isopeptide (Lys-Gly) (interchain with G-Cter in SUMO2); alternate. Serine 37 is subject to Phosphoserine. The Q motif signature appears at 44 to 72 (SGFRDFLLKPELLRAIVDCGFEHPSEVQH). The Helicase ATP-binding domain maps to 75–248 (IPQAILGMDV…RKFMQDPMEV (174 aa)). 88-95 (AKSGMGKT) lines the ATP pocket. Residues lysine 154 and lysine 162 each participate in a glycyl lysine isopeptide (Lys-Gly) (interchain with G-Cter in SUMO2) cross-link. Threonine 171 carries the post-translational modification Phosphothreonine. The DECD box motif lies at 195–198 (DECD). Residues lysine 240 and lysine 255 each participate in a glycyl lysine isopeptide (Lys-Gly) (interchain with G-Cter in SUMO2) cross-link. In terms of domain architecture, Helicase C-terminal spans 260–421 (GLQQYYVKLK…ELPEEIDIST (162 aa)). At serine 426 the chain carries Phosphoserine.

It belongs to the DEAD box helicase family. DECD subfamily. As to quaternary structure, binds ALYREF/THOC4 and DDX39B/BAT1. Interacts with the apo-AREX complex component SARNP. Interacts with MX1. Interacts with MCM3AP isoform GANP. Interacts with ECD. Interacts with PHAX; this interaction stimulates PHAX RNA binding activity. In terms of processing, SUMOylated by RANBP2; SUMOylation modification affects its ability to bind RNA.

It is found in the nucleus. The protein resides in the cytoplasm. It catalyses the reaction ATP + H2O = ADP + phosphate + H(+). Its function is as follows. Helicase that plays an essential role in mRNA export and is involved in multiple steps in RNA metabolism including alternative splicing. Regulates nuclear mRNA export to the cytoplasm through association with ECD. Also involved in spliceosomal uridine-rich small nuclear RNA (U snRNA) export by stimulating the RNA binding of adapter PHAX. Plays a role in the negative regulation of type I IFN production by increasing the nuclear retention of antiviral transcripts and thus reducing their protein expression. Independently of the interferon pathway, plays an antiviral role against alphaviruses by binding to a 5' conserved sequence element in the viral genomic RNA. The protein is ATP-dependent RNA helicase DDX39A of Mus musculus (Mouse).